Here is a 35-residue protein sequence, read N- to C-terminus: Photosystem II reaction center protein T (35 aa).

A helical transmembrane segment spans residues 3–23 (ALVYTFLLIGTLGIIFFAIFF).

This sequence belongs to the PsbT family. In terms of assembly, PSII is composed of 1 copy each of membrane proteins PsbA, PsbB, PsbC, PsbD, PsbE, PsbF, PsbH, PsbI, PsbJ, PsbK, PsbL, PsbM, PsbT, PsbY, PsbZ, Psb30/Ycf12, at least 3 peripheral proteins of the oxygen-evolving complex and a large number of cofactors. It forms dimeric complexes.

The protein resides in the plastid. Its subcellular location is the chloroplast thylakoid membrane. Functionally, found at the monomer-monomer interface of the photosystem II (PS II) dimer, plays a role in assembly and dimerization of PSII. PSII is a light-driven water plastoquinone oxidoreductase, using light energy to abstract electrons from H(2)O, generating a proton gradient subsequently used for ATP formation. The sequence is that of Photosystem II reaction center protein T from Coleochaete orbicularis (Charophycean green alga).